Consider the following 904-residue polypeptide: Protein translocase subunit SecA (904 aa).

ATP contacts are provided by residues Gln89, 107 to 111 (GEGKT), and Asp502. Zn(2+) is bound by residues Cys886, Cys888, Cys897, and His898.

The protein belongs to the SecA family. Monomer and homodimer. Part of the essential Sec protein translocation apparatus which comprises SecA, SecYEG and auxiliary proteins SecDF-YajC and YidC. It depends on Zn(2+) as a cofactor.

It is found in the cell inner membrane. It localises to the cytoplasm. The catalysed reaction is ATP + H2O + cellular proteinSide 1 = ADP + phosphate + cellular proteinSide 2.. Part of the Sec protein translocase complex. Interacts with the SecYEG preprotein conducting channel. Has a central role in coupling the hydrolysis of ATP to the transfer of proteins into and across the cell membrane, serving both as a receptor for the preprotein-SecB complex and as an ATP-driven molecular motor driving the stepwise translocation of polypeptide chains across the membrane. The sequence is that of Protein translocase subunit SecA from Rhizobium etli (strain CIAT 652).